The chain runs to 407 residues: Multifunctional CCA protein (407 aa).

ATP contacts are provided by Gly8 and Arg11. CTP is bound by residues Gly8 and Arg11. Mg(2+) contacts are provided by Asp21 and Asp23. Positions 91, 137, and 140 each coordinate ATP. 3 residues coordinate CTP: Arg91, Arg137, and Arg140. The 102-residue stretch at 226–327 (TGIHVMAVVD…VKLLERTDAL (102 aa)) folds into the HD domain.

It belongs to the tRNA nucleotidyltransferase/poly(A) polymerase family. Bacterial CCA-adding enzyme type 1 subfamily. As to quaternary structure, monomer. Can also form homodimers and oligomers. Mg(2+) serves as cofactor. The cofactor is Ni(2+).

The catalysed reaction is a tRNA precursor + 2 CTP + ATP = a tRNA with a 3' CCA end + 3 diphosphate. It carries out the reaction a tRNA with a 3' CCA end + 2 CTP + ATP = a tRNA with a 3' CCACCA end + 3 diphosphate. Functionally, catalyzes the addition and repair of the essential 3'-terminal CCA sequence in tRNAs without using a nucleic acid template. Adds these three nucleotides in the order of C, C, and A to the tRNA nucleotide-73, using CTP and ATP as substrates and producing inorganic pyrophosphate. tRNA 3'-terminal CCA addition is required both for tRNA processing and repair. Also involved in tRNA surveillance by mediating tandem CCA addition to generate a CCACCA at the 3' terminus of unstable tRNAs. While stable tRNAs receive only 3'-terminal CCA, unstable tRNAs are marked with CCACCA and rapidly degraded. This is Multifunctional CCA protein from Aromatoleum aromaticum (strain DSM 19018 / LMG 30748 / EbN1) (Azoarcus sp. (strain EbN1)).